Consider the following 213-residue polypeptide: Ribonuclease HII (213 aa).

The RNase H type-2 domain occupies 18–213; that stretch reads GLYAGVDEVG…RPVKERLAKN (196 aa). A divalent metal cation contacts are provided by Asp-24, Glu-25, and Asp-116.

It belongs to the RNase HII family. Mn(2+) serves as cofactor. It depends on Mg(2+) as a cofactor.

The protein resides in the cytoplasm. It catalyses the reaction Endonucleolytic cleavage to 5'-phosphomonoester.. Functionally, endonuclease that specifically degrades the RNA of RNA-DNA hybrids. This Shewanella sediminis (strain HAW-EB3) protein is Ribonuclease HII.